A 241-amino-acid chain; its full sequence is Probable transcriptional regulatory protein PSHAb0060 (241 aa).

This sequence belongs to the TACO1 family.

Its subcellular location is the cytoplasm. The chain is Probable transcriptional regulatory protein PSHAb0060 from Pseudoalteromonas translucida (strain TAC 125).